A 430-amino-acid chain; its full sequence is ATP-dependent RNA helicase RhlB (430 aa).

A Q motif motif is present at residues 9 to 37; the sequence is QKFSDFALHPQVIEALESKGFHYCTPIQA. In terms of domain architecture, Helicase ATP-binding spans 40–219; sequence LPLTLSGRDV…FEQMNNAEYV (180 aa). 53–60 contacts ATP; the sequence is AQTGTGKT. Positions 165–168 match the DEAD box motif; it reads DEAD. In terms of domain architecture, Helicase C-terminal spans 245–390; sequence RLLQTLLEEE…LSKYNSDALM (146 aa). A disordered region spans residues 392 to 430; it reads DLPAPKRLTRPPRSNNGPRRHNSAPRRSGAPRNNRKRAD.

This sequence belongs to the DEAD box helicase family. RhlB subfamily. As to quaternary structure, component of the RNA degradosome, which is a multiprotein complex involved in RNA processing and mRNA degradation.

Its subcellular location is the cytoplasm. It catalyses the reaction ATP + H2O = ADP + phosphate + H(+). Functionally, DEAD-box RNA helicase involved in RNA degradation. Has RNA-dependent ATPase activity and unwinds double-stranded RNA. In Pectobacterium atrosepticum (strain SCRI 1043 / ATCC BAA-672) (Erwinia carotovora subsp. atroseptica), this protein is ATP-dependent RNA helicase RhlB.